The chain runs to 360 residues: Phenylalanine--tRNA ligase alpha subunit (360 aa).

E255 contacts Mg(2+).

It belongs to the class-II aminoacyl-tRNA synthetase family. Phe-tRNA synthetase alpha subunit type 1 subfamily. In terms of assembly, tetramer of two alpha and two beta subunits. It depends on Mg(2+) as a cofactor.

It is found in the cytoplasm. The enzyme catalyses tRNA(Phe) + L-phenylalanine + ATP = L-phenylalanyl-tRNA(Phe) + AMP + diphosphate + H(+). This is Phenylalanine--tRNA ligase alpha subunit from Rhizorhabdus wittichii (strain DSM 6014 / CCUG 31198 / JCM 15750 / NBRC 105917 / EY 4224 / RW1) (Sphingomonas wittichii).